Reading from the N-terminus, the 350-residue chain is tRNA N6-adenosine threonylcarbamoyltransferase (350 aa).

Fe cation contacts are provided by histidine 115 and histidine 119. Residues 137 to 141 (IISGG), aspartate 170, glycine 183, and asparagine 281 each bind substrate. Aspartate 309 serves as a coordination point for Fe cation.

It belongs to the KAE1 / TsaD family. It depends on Fe(2+) as a cofactor.

The protein resides in the cytoplasm. The enzyme catalyses L-threonylcarbamoyladenylate + adenosine(37) in tRNA = N(6)-L-threonylcarbamoyladenosine(37) in tRNA + AMP + H(+). Functionally, required for the formation of a threonylcarbamoyl group on adenosine at position 37 (t(6)A37) in tRNAs that read codons beginning with adenine. Is involved in the transfer of the threonylcarbamoyl moiety of threonylcarbamoyl-AMP (TC-AMP) to the N6 group of A37, together with TsaE and TsaB. TsaD likely plays a direct catalytic role in this reaction. This chain is tRNA N6-adenosine threonylcarbamoyltransferase, found in Ehrlichia canis (strain Jake).